The chain runs to 505 residues: RNA-splicing ligase RtcB homolog (505 aa).

Residues Asp-119, Cys-122, His-227, and His-259 each contribute to the Mn(2+) site. 226–230 serves as a coordination point for GMP; that stretch reads NHYAE. Ser-300 bears the Phosphoserine mark. His-353 contacts Mn(2+). GMP is bound by residues 353–354, 402–405, Ser-409, and 428–431; these read HN, GGTM, and HGAG. His-428 functions as the GMP-histidine intermediate in the catalytic mechanism. Residue Lys-496 forms a Glycyl lysine isopeptide (Lys-Gly) (interchain with G-Cter in SUMO2) linkage. Lys-504 contacts GMP.

It belongs to the RtcB family. Catalytic component of the tRNA-splicing ligase complex. Mn(2+) serves as cofactor.

It localises to the nucleus. Its subcellular location is the cytoplasm. The enzyme catalyses a 3'-end 3'-phospho-ribonucleotide-RNA + a 5'-end dephospho-ribonucleoside-RNA + GTP = a ribonucleotidyl-ribonucleotide-RNA + GMP + diphosphate. It catalyses the reaction a 3'-end 2',3'-cyclophospho-ribonucleotide-RNA + a 5'-end dephospho-ribonucleoside-RNA + GTP + H2O = a ribonucleotidyl-ribonucleotide-RNA + GMP + diphosphate + H(+). In terms of biological role, catalytic subunit of the tRNA-splicing ligase complex that acts by directly joining spliced tRNA halves to mature-sized tRNAs by incorporating the precursor-derived splice junction phosphate into the mature tRNA as a canonical 3',5'-phosphodiester. May act as an RNA ligase with broad substrate specificity, and may function toward other RNAs. The polypeptide is RNA-splicing ligase RtcB homolog (Macaca fascicularis (Crab-eating macaque)).